The sequence spans 435 residues: Methylenetetrahydrofolate--tRNA-(uracil-5-)-methyltransferase TrmFO (435 aa).

Position 10–15 (10–15) interacts with FAD; it reads GAGLAG.

This sequence belongs to the MnmG family. TrmFO subfamily. FAD is required as a cofactor.

Its subcellular location is the cytoplasm. It carries out the reaction uridine(54) in tRNA + (6R)-5,10-methylene-5,6,7,8-tetrahydrofolate + NADH + H(+) = 5-methyluridine(54) in tRNA + (6S)-5,6,7,8-tetrahydrofolate + NAD(+). The enzyme catalyses uridine(54) in tRNA + (6R)-5,10-methylene-5,6,7,8-tetrahydrofolate + NADPH + H(+) = 5-methyluridine(54) in tRNA + (6S)-5,6,7,8-tetrahydrofolate + NADP(+). Functionally, catalyzes the folate-dependent formation of 5-methyl-uridine at position 54 (M-5-U54) in all tRNAs. The sequence is that of Methylenetetrahydrofolate--tRNA-(uracil-5-)-methyltransferase TrmFO from Geotalea uraniireducens (strain Rf4) (Geobacter uraniireducens).